An 89-amino-acid polypeptide reads, in one-letter code: Small ribosomal subunit protein uS15 (89 aa).

Belongs to the universal ribosomal protein uS15 family. As to quaternary structure, part of the 30S ribosomal subunit. Forms a bridge to the 50S subunit in the 70S ribosome, contacting the 23S rRNA.

One of the primary rRNA binding proteins, it binds directly to 16S rRNA where it helps nucleate assembly of the platform of the 30S subunit by binding and bridging several RNA helices of the 16S rRNA. Functionally, forms an intersubunit bridge (bridge B4) with the 23S rRNA of the 50S subunit in the ribosome. The polypeptide is Small ribosomal subunit protein uS15 (Methylobacterium sp. (strain 4-46)).